Here is a 193-residue protein sequence, read N- to C-terminus: Pyridoxal 5'-phosphate synthase subunit PdxT (193 aa).

50–52 (GES) serves as a coordination point for L-glutamine. The Nucleophile role is filled by Cys82. L-glutamine-binding positions include Arg109 and 136 to 137 (IR). Active-site charge relay system residues include His172 and Glu174.

It belongs to the glutaminase PdxT/SNO family. As to quaternary structure, in the presence of PdxS, forms a dodecamer of heterodimers. Only shows activity in the heterodimer.

It carries out the reaction aldehydo-D-ribose 5-phosphate + D-glyceraldehyde 3-phosphate + L-glutamine = pyridoxal 5'-phosphate + L-glutamate + phosphate + 3 H2O + H(+). The catalysed reaction is L-glutamine + H2O = L-glutamate + NH4(+). Its pathway is cofactor biosynthesis; pyridoxal 5'-phosphate biosynthesis. Catalyzes the hydrolysis of glutamine to glutamate and ammonia as part of the biosynthesis of pyridoxal 5'-phosphate. The resulting ammonia molecule is channeled to the active site of PdxS. This Streptococcus pneumoniae serotype 19F (strain G54) protein is Pyridoxal 5'-phosphate synthase subunit PdxT.